Here is a 278-residue protein sequence, read N- to C-terminus: Large ribosomal subunit protein uL2 (278 aa).

Residues 212-278 are disordered; sequence NRHRGIRPQT…IISRKKHKKG (67 aa). The segment covering 257–278 has biased composition (basic residues); it reads YKTRKKKASDKLIISRKKHKKG.

Belongs to the universal ribosomal protein uL2 family. As to quaternary structure, part of the 50S ribosomal subunit. Forms a bridge to the 30S subunit in the 70S ribosome.

Functionally, one of the primary rRNA binding proteins. Required for association of the 30S and 50S subunits to form the 70S ribosome, for tRNA binding and peptide bond formation. It has been suggested to have peptidyltransferase activity; this is somewhat controversial. Makes several contacts with the 16S rRNA in the 70S ribosome. The sequence is that of Large ribosomal subunit protein uL2 from Helicobacter pylori (strain Shi470).